The primary structure comprises 319 residues: L-lactate dehydrogenase (319 aa).

NAD(+)-binding positions include arginine 10 to valine 11, aspartate 32, arginine 37, tyrosine 62, and glycine 76 to valine 77. Substrate-binding positions include glutamine 79, arginine 85, and asparagine 117–aspartate 120. Residues valine 115 to asparagine 117 and serine 140 each bind NAD(+). Aspartate 145–arginine 148 contributes to the substrate binding site. Beta-D-fructose 1,6-bisphosphate contacts are provided by arginine 150 and histidine 165. Residue histidine 172 is the Proton acceptor of the active site. Tyrosine 217 carries the phosphotyrosine modification. Substrate is bound at residue threonine 226.

Belongs to the LDH/MDH superfamily. LDH family. In terms of assembly, homotetramer.

The protein localises to the cytoplasm. It catalyses the reaction (S)-lactate + NAD(+) = pyruvate + NADH + H(+). Its pathway is fermentation; pyruvate fermentation to lactate; (S)-lactate from pyruvate: step 1/1. Allosterically activated by fructose 1,6-bisphosphate (FBP). Inactivated by Mn(2+), Co(2+), Cd(2+) and Zn(2+). Functionally, catalyzes the conversion of lactate to pyruvate. It is stereospecific for L(+)-lactate. This is L-lactate dehydrogenase from Thermotoga maritima (strain ATCC 43589 / DSM 3109 / JCM 10099 / NBRC 100826 / MSB8).